A 95-amino-acid chain; its full sequence is Small ubiquitin-related modifier 4 (95 aa).

The Ubiquitin-like domain maps to 17-95 (HINLKVAGQD…VFQQPTGGVY (79 aa)). G93 is covalently cross-linked (Glycyl lysine isopeptide (Gly-Lys) (interchain with K-? in acceptor proteins)). The propeptide occupies 94–95 (VY).

Belongs to the ubiquitin family. SUMO subfamily. As to quaternary structure, interacts with SAE2. Covalently attached to a number of proteins. In terms of processing, in contrast to SUMO1, SUMO2 and SUMO3, seems to be insensitive to sentrin-specific proteases due to the presence of Pro-90. This may impair processing to mature form and conjugation to substrates. In terms of tissue distribution, expressed mainly in adult and embryonic kidney. Expressed at various levels in immune tissues, with the highest expression in the lymph node and spleen.

Its function is as follows. Ubiquitin-like protein which can be covalently attached to target lysines as a monomer. Does not seem to be involved in protein degradation and may modulate protein subcellular localization, stability or activity. Upon oxidative stress, conjugates to various anti-oxidant enzymes, chaperones, and stress defense proteins. May also conjugate to NFKBIA, TFAP2A and FOS, negatively regulating their transcriptional activity, and to NR3C1, positively regulating its transcriptional activity. Covalent attachment to its substrates requires prior activation by the E1 complex SAE1-SAE2 and linkage to the E2 enzyme UBE2I. This chain is Small ubiquitin-related modifier 4 (SUMO4), found in Homo sapiens (Human).